Here is a 515-residue protein sequence, read N- to C-terminus: E3 ubiquitin-protein ligase RNF38 (515 aa).

Positions 57-71 match the Bipartite nuclear localization signal 1 motif; it reads DSPSPKRQRLSHSVF. A disordered region spans residues 73–141; that stretch reads YTSASPAPSP…LSRHNSISQD (69 aa). Residues 89-104 show a composition bias toward polar residues; the sequence is MTSNRQPPSVRPSQHH. Positions 115-131 match the Bipartite nuclear localization signal 2 motif; that stretch reads RNRRSPPVRRQRGRRDR. The span at 115 to 134 shows a compositional bias: basic residues; that stretch reads RNRRSPPVRRQRGRRDRLSR. An RING-type zinc finger spans residues 463–504; that stretch reads CVVCMCDFESRQLLRVLPCNHEFHAKCVDKWLKANRTCPICR.

Widely expressed with highest levels in testis.

It localises to the nucleus. The catalysed reaction is S-ubiquitinyl-[E2 ubiquitin-conjugating enzyme]-L-cysteine + [acceptor protein]-L-lysine = [E2 ubiquitin-conjugating enzyme]-L-cysteine + N(6)-ubiquitinyl-[acceptor protein]-L-lysine.. It functions in the pathway protein modification; protein ubiquitination. In terms of biological role, acts as an E3 ubiquitin-protein ligase able to ubiquitinate p53/TP53 which promotes its relocalization to discrete foci associated with PML nuclear bodies. Exhibits preference for UBE2D2 as a E2 enzyme. The sequence is that of E3 ubiquitin-protein ligase RNF38 from Homo sapiens (Human).